A 334-amino-acid chain; its full sequence is Transcription initiation factor IIB (334 aa).

The TFIIB-type zinc-finger motif lies at 34-65; that stretch reads EELVCPMCDSKNIIKDYEKAEIVCEDCGCVLQ. Zn(2+) is bound by residues C38, C41, C57, and C60. Tandem repeats lie at residues 151-234 and 245-326.

Belongs to the TFIIB family.

Stabilizes TBP binding to an archaeal box-A promoter. Also responsible for recruiting RNA polymerase II to the pre-initiation complex (DNA-TBP-TFIIB). This Methanococcus aeolicus (strain ATCC BAA-1280 / DSM 17508 / OCM 812 / Nankai-3) protein is Transcription initiation factor IIB.